We begin with the raw amino-acid sequence, 640 residues long: Biosynthetic arginine decarboxylase (640 aa).

Residue Lys-105 is modified to N6-(pyridoxal phosphate)lysine. 290–300 serves as a coordination point for substrate; sequence FDVGGGLAIDY.

Belongs to the Orn/Lys/Arg decarboxylase class-II family. SpeA subfamily. It depends on Mg(2+) as a cofactor. Pyridoxal 5'-phosphate serves as cofactor.

It carries out the reaction L-arginine + H(+) = agmatine + CO2. In terms of biological role, catalyzes the biosynthesis of agmatine from arginine. This is Biosynthetic arginine decarboxylase from Vibrio vulnificus (strain CMCP6).